An 869-amino-acid polypeptide reads, in one-letter code: Probable inorganic carbon transporter subunit DabA (869 aa).

The tract at residues 1-32 (MSTATLEQRAKRGEAPRANDAGHCAHPADGAR) is disordered. Residues 8–17 (QRAKRGEAPR) are compositionally biased toward basic and acidic residues. Zn(2+) is bound by residues cysteine 376, aspartate 378, histidine 555, and cysteine 570.

Belongs to the inorganic carbon transporter (TC 9.A.2) DabA family. In terms of assembly, forms a complex with DabB. Zn(2+) is required as a cofactor.

Its subcellular location is the cell inner membrane. Its function is as follows. Part of an energy-coupled inorganic carbon pump. This Burkholderia multivorans (strain ATCC 17616 / 249) protein is Probable inorganic carbon transporter subunit DabA.